A 435-amino-acid polypeptide reads, in one-letter code: Probable exopolygalacturonase B (435 aa).

An N-terminal signal peptide occupies residues 1-15 (MKFFLATLFASAVSS). N59, N184, and N224 each carry an N-linked (GlcNAc...) asparagine glycan. PbH1 repeat units lie at residues 208 to 239 (SKDVSFDDVYIHAFSTNKSALPKNSDGFDSLN), 240 to 261 (VDGLTVTNTRVDVGDDCFSPKP), 262 to 283 (NTTNIFVQNLLCNNTHGVSMGS), 294 to 315 (IEHAYIENVTLLNGQNGARLKA), and 326 to 347 (INNITYKNIRIENTDAPVVLDQ). D254 (proton donor) is an active-site residue. Cysteines 256 and 273 form a disulfide. N-linked (GlcNAc...) asparagine glycosylation is found at N262 and N274. Residue H277 is part of the active site. Residues N301, N328, N365, and N373 are each glycosylated (N-linked (GlcNAc...) asparagine). A PbH1 6 repeat occupies 366–388 (VTNILFENISGTSSGKNGKVVAD). A disulfide bond links C391 and C397. N406 is a glycosylation site (N-linked (GlcNAc...) asparagine).

This sequence belongs to the glycosyl hydrolase 28 family.

It localises to the secreted. It catalyses the reaction [(1-&gt;4)-alpha-D-galacturonosyl](n) + H2O = alpha-D-galacturonate + [(1-&gt;4)-alpha-D-galacturonosyl](n-1). Its function is as follows. Specific in hydrolyzing the terminal glycosidic bond of polygalacturonic acid and oligogalacturonates. This is Probable exopolygalacturonase B (pgxB) from Aspergillus oryzae (strain ATCC 42149 / RIB 40) (Yellow koji mold).